We begin with the raw amino-acid sequence, 210 residues long: Proteasome subunit beta (210 aa).

Residues Met-1 to Gly-9 constitute a propeptide, removed in mature form; by autocatalysis. Thr-10 serves as the catalytic Nucleophile.

It belongs to the peptidase T1B family. As to quaternary structure, the 20S proteasome core is composed of 14 alpha and 14 beta subunits that assemble into four stacked heptameric rings, resulting in a barrel-shaped structure. The two inner rings, each composed of seven catalytic beta subunits, are sandwiched by two outer rings, each composed of seven alpha subunits. The catalytic chamber with the active sites is on the inside of the barrel. Has a gated structure, the ends of the cylinder being occluded by the N-termini of the alpha-subunits. Is capped at one or both ends by the proteasome regulatory ATPase, PAN.

The protein localises to the cytoplasm. It catalyses the reaction Cleavage of peptide bonds with very broad specificity.. The formation of the proteasomal ATPase PAN-20S proteasome complex, via the docking of the C-termini of PAN into the intersubunit pockets in the alpha-rings, triggers opening of the gate for substrate entry. Interconversion between the open-gate and close-gate conformations leads to a dynamic regulation of the 20S proteasome proteolysis activity. Component of the proteasome core, a large protease complex with broad specificity involved in protein degradation. This chain is Proteasome subunit beta, found in Methanosarcina mazei (strain ATCC BAA-159 / DSM 3647 / Goe1 / Go1 / JCM 11833 / OCM 88) (Methanosarcina frisia).